Here is a 177-residue protein sequence, read N- to C-terminus: Peptide methionine sulfoxide reductase MsrA (177 aa).

Cys15 is a catalytic residue.

This sequence belongs to the MsrA Met sulfoxide reductase family.

The catalysed reaction is L-methionyl-[protein] + [thioredoxin]-disulfide + H2O = L-methionyl-(S)-S-oxide-[protein] + [thioredoxin]-dithiol. It carries out the reaction [thioredoxin]-disulfide + L-methionine + H2O = L-methionine (S)-S-oxide + [thioredoxin]-dithiol. Functionally, has an important function as a repair enzyme for proteins that have been inactivated by oxidation. Catalyzes the reversible oxidation-reduction of methionine sulfoxide in proteins to methionine. In Listeria monocytogenes serotype 4b (strain CLIP80459), this protein is Peptide methionine sulfoxide reductase MsrA.